The following is a 219-amino-acid chain: Glycerol-3-phosphate acyltransferase 2 (219 aa).

Helical transmembrane passes span 1–21 (MVFW…GSTP), 55–75 (WPAL…VVFA), 93–113 (ALDL…AVLL), 135–155 (VLLA…GVAL), and 160–180 (IVSL…CGLE).

It belongs to the PlsY family. As to quaternary structure, probably interacts with PlsX.

It localises to the cell inner membrane. It carries out the reaction an acyl phosphate + sn-glycerol 3-phosphate = a 1-acyl-sn-glycero-3-phosphate + phosphate. Its pathway is lipid metabolism; phospholipid metabolism. In terms of biological role, catalyzes the transfer of an acyl group from acyl-phosphate (acyl-PO(4)) to glycerol-3-phosphate (G3P) to form lysophosphatidic acid (LPA). This enzyme utilizes acyl-phosphate as fatty acyl donor, but not acyl-CoA or acyl-ACP. This chain is Glycerol-3-phosphate acyltransferase 2, found in Rhizobium johnstonii (strain DSM 114642 / LMG 32736 / 3841) (Rhizobium leguminosarum bv. viciae).